We begin with the raw amino-acid sequence, 674 residues long: Translation factor GUF1, mitochondrial (674 aa).

The transit peptide at 1–33 (MLRPWFCFRSCVSLLSNRRQYGFRYLATAEPSK) directs the protein to the mitochondrion. Residues 32–51 (SKSEKPAKPVKPAKPMSVQE) form a disordered region. The 183-residue stretch at 75-257 (QNYRNFSIVA…SIIKNIPAPV (183 aa)) folds into the tr-type G domain. Residues 84–91 (AHVDHGKS), 150–154 (DTPGH), and 204–207 (NKID) contribute to the GTP site.

Belongs to the TRAFAC class translation factor GTPase superfamily. Classic translation factor GTPase family. LepA subfamily.

The protein localises to the mitochondrion inner membrane. The enzyme catalyses GTP + H2O = GDP + phosphate + H(+). In terms of biological role, promotes mitochondrial protein synthesis. May act as a fidelity factor of the translation reaction, by catalyzing a one-codon backward translocation of tRNAs on improperly translocated ribosomes. Binds to mitochondrial ribosomes in a GTP-dependent manner. This is Translation factor GUF1, mitochondrial from Lodderomyces elongisporus (strain ATCC 11503 / CBS 2605 / JCM 1781 / NBRC 1676 / NRRL YB-4239) (Yeast).